The primary structure comprises 471 residues: BRISC complex subunit FAM175B (471 aa).

Residues 7 to 161 (LVTISGAALS…THKFRHVFLR (155 aa)) enclose the MPN domain. A coiled-coil region spans residues 245–272 (ESDLEVAELEKQVHELKIKIATQQLAKR). The disordered stretch occupies residues 343–445 (AEKSRRAGRS…FSDAECPISS (103 aa)). Positions 359–370 (NQQQETQNFFTN) are enriched in low complexity.

The protein belongs to the FAM175 family. Abro1 subfamily. As to quaternary structure, component of the BRISC complex, at least composed of FAM175B/ABRO1, BRCC3/BRCC36, BABAM2 and BABAM1/NBA1. Within the complex, interacts directly with BRCC3/BRCC36. The heterodimer with BRCC3/BRCC36 assembles into a heterotetramer. The BRISC complex binds polyubiquitin.

It is found in the cytoplasm. The protein resides in the nucleus. It localises to the cytoskeleton. Its subcellular location is the spindle pole. Component of the BRISC complex that specifically cleaves 'Lys-63'-linked polyubiquitin, leaving the last ubiquitin chain attached to its substrates. Does not have activity by itself, but the catalytic subunit BRCC3/BRCC36 needs to be associated into a heterotetramer with FAM175B for minimal in vitro activity. May act as a central scaffold protein that assembles the various components of the BRISC complex and retains them in the cytoplasm. Plays a role in regulating the onset of apoptosis via its role in modulating 'Lys-63'-linked ubiquitination of target proteins. Required for normal mitotic spindle assembly and microtubule attachment to kinetochores via its role in deubiquitinating numa1. This is BRISC complex subunit FAM175B from Camponotus floridanus (Florida carpenter ant).